The following is a 154-amino-acid chain: MAL-like protein (154 aa).

The next 4 helical transmembrane spans lie at 24–44, 61–81, 99–119, and 131–151; these read LFLTIPFAFFLPELVFGFWVW, VLYVSLTSFLISLMFLMSYLF, GTTGILYMSASVLQAYATIIS, and VAASFFAFLTTLLYILHAFSI. The MARVEL domain maps to 24–154; that stretch reads LFLTIPFAFF…ILHAFSIYYH (131 aa).

The protein belongs to the MAL family.

It localises to the membrane. In Mus musculus (Mouse), this protein is MAL-like protein (Mall).